The chain runs to 198 residues: Putative manganese efflux pump MntP (198 aa).

6 helical membrane-spanning segments follow: residues 3 to 23, 37 to 57, 65 to 85, 105 to 127, 131 to 153, and 171 to 191; these read SIELLIIAVGLSMDAFAVAIC, VLTGCFFGGFQALMPLLGYLL, ITSIDHWIAFGLLSLIGINMI, SLTVMAFATSIDALAIGVTFAFL, IIPAVTMIGITTFTFSFLGVKIG, and ILIGMGCKILFDHLGVISFVF.

This sequence belongs to the MntP (TC 9.B.29) family.

It localises to the cell membrane. Probably functions as a manganese efflux pump. The protein is Putative manganese efflux pump MntP of Acetivibrio thermocellus (strain ATCC 27405 / DSM 1237 / JCM 9322 / NBRC 103400 / NCIMB 10682 / NRRL B-4536 / VPI 7372) (Clostridium thermocellum).